The primary structure comprises 24 residues: Humanin-like 7 (24 aa).

It belongs to the humanin family. As to expression, expressed in testis.

The protein localises to the secreted. Its subcellular location is the cytoplasm. Plays a role as a neuroprotective and antiapoptotic factor. This Homo sapiens (Human) protein is Humanin-like 7.